A 90-amino-acid polypeptide reads, in one-letter code: Small ribosomal subunit protein bS16 (90 aa).

Belongs to the bacterial ribosomal protein bS16 family.

The chain is Small ribosomal subunit protein bS16 from Moorella thermoacetica (strain ATCC 39073 / JCM 9320).